The chain runs to 238 residues: UPF0328 protein ECU07_0010 (238 aa).

2 disordered regions span residues 1–154 and 211–238; these read MAAP…NTQR and GRLHGSPTKGAQTAQQAQPHPPKQLATL. The span at 106–128 shows a compositional bias: basic and acidic residues; the sequence is HTEGCHTHEANPEPNTKHTETES. The span at 129–152 shows a compositional bias: polar residues; it reads PKPQTSTQHHTPITIPSSLLSQNT.

This sequence belongs to the UPF0328 family.

This is UPF0328 protein ECU07_0010 from Encephalitozoon cuniculi (strain GB-M1) (Microsporidian parasite).